A 338-amino-acid chain; its full sequence is Fructose-1,6-bisphosphatase class 1 (338 aa).

Residues Glu-90, Asp-112, Leu-114, and Asp-115 each coordinate Mg(2+). Substrate contacts are provided by residues 115–118 (DGSS), Asn-207, and Lys-273. Residue Glu-279 participates in Mg(2+) binding.

It belongs to the FBPase class 1 family. As to quaternary structure, homotetramer. The cofactor is Mg(2+).

The protein localises to the cytoplasm. It catalyses the reaction beta-D-fructose 1,6-bisphosphate + H2O = beta-D-fructose 6-phosphate + phosphate. It participates in carbohydrate biosynthesis; gluconeogenesis. The chain is Fructose-1,6-bisphosphatase class 1 from Stenotrophomonas maltophilia (strain K279a).